Consider the following 355-residue polypeptide: MGFFADLFKVVYSTWRQYIYTTGALLTLTWKWFTEGNEYFVEHVYPEPECLKNWNHKFVQLKNIRMHYVEEGPADGDVLLMVHGFPEFWYSWRFQLEHFKHTHRCIAIDMRGYNTTDRPSGISDYNLTHLVEDIRQFIEILELKRVTLAAHDWGAIVCWRVAMLHSNLIDRLVICNVPHPFAFFEVYNMSKEQRNKSWYIYLFQSQYIPEIAMRSNKMKMLEAMFRGSKAGIRNSENFTDEDMLAWKHVFSQPGGTTGPLNYYRDLFNAPAIPRKLQIVQPKVLILWGDEDAFLDKKGAELSVQFCRDCRVQMIRGASHWVQQDQPQLVNVYMEQFMNEDSYRPIGEIKTFKSHL.

The AB hydrolase-1 domain occupies 78-323 (VLLMVHGFPE…IRGASHWVQQ (246 aa)). Aspartate 152 (nucleophile) is an active-site residue. Residue tyrosine 263 is the Proton donor of the active site. Residue histidine 319 is the Proton acceptor of the active site.

Belongs to the AB hydrolase superfamily. Epoxide hydrolase family.

It carries out the reaction an epoxide + H2O = an ethanediol. It participates in lipid metabolism. Catalyzes the hydrolysis of epoxide-containing fatty acids. Active in vitro against trans-1,3-diphenylpropene oxide (t-DPPO), epoxyeicosatrienoic acids (EETs) including 8,9-EET, 11,12-EET and 14,15-EET and the linoleic acid metabolites 12,13-epoxy-9-octadecenoate (12,13-EpOME) and 9,10-epoxy-12-octadecenoate (9,10-EpOME). The protein is Epoxide hydrolase 2 of Caenorhabditis elegans.